We begin with the raw amino-acid sequence, 141 residues long: Large ribosomal subunit protein uL16 (141 aa).

Positions 1 to 20 are disordered; sequence MLMPKRTKYRKQMKGRNRGK.

This sequence belongs to the universal ribosomal protein uL16 family. As to quaternary structure, part of the 50S ribosomal subunit.

Functionally, binds 23S rRNA and is also seen to make contacts with the A and possibly P site tRNAs. The sequence is that of Large ribosomal subunit protein uL16 from Helicobacter hepaticus (strain ATCC 51449 / 3B1).